A 464-amino-acid polypeptide reads, in one-letter code: NADH dehydrogenase [ubiquinone] flavoprotein 1, mitochondrial (464 aa).

Residues 1 to 20 constitute a mitochondrion transit peptide; sequence MLATRRLLGWSLPARVSVRF. Residue Lys81 is modified to N6-acetyllysine; alternate. N6-succinyllysine; alternate is present on Lys81. 87-96 contributes to the NADH binding site; it reads GRGGAGFPTG. Lys104 carries the N6-acetyllysine modification. 199 to 247 contacts FMN; that stretch reads RGAGAYICGEETALIESIEGKQGKPRLKPPFPADVGVFGCPTTVANVET. An Omega-N-methylarginine modification is found at Arg257. At Lys375 the chain carries N6-acetyllysine. Positions 379, 382, 385, and 425 each coordinate [4Fe-4S] cluster.

The protein belongs to the complex I 51 kDa subunit family. Core subunit of respiratory chain NADH dehydrogenase (Complex I) which is composed of 45 different subunits. This is a component of the flavoprotein-sulfur (FP) fragment of the enzyme. Interacts with RAB5IF. The cofactor is FMN. Requires [4Fe-4S] cluster as cofactor.

The protein localises to the mitochondrion inner membrane. It carries out the reaction a ubiquinone + NADH + 5 H(+)(in) = a ubiquinol + NAD(+) + 4 H(+)(out). In terms of biological role, core subunit of the mitochondrial membrane respiratory chain NADH dehydrogenase (Complex I) which catalyzes electron transfer from NADH through the respiratory chain, using ubiquinone as an electron acceptor. Part of the peripheral arm of the enzyme, where the electrons from NADH are accepted by flavin mononucleotide (FMN) and then passed along a chain of iron-sulfur clusters by electron tunnelling to the final acceptor ubiquinone. Contains FMN, which is the initial electron acceptor as well as one iron-sulfur cluster. The sequence is that of NADH dehydrogenase [ubiquinone] flavoprotein 1, mitochondrial from Pan troglodytes (Chimpanzee).